A 433-amino-acid chain; its full sequence is MTDILKTTYSEEVFSSALELMPGGVSSPVRAFKSVGGQPIVFDRVKGPYAWDIDGNRYIDYIGSWGPAICGHAHPEVITALQEAIEKGTSFGAPCVLENKLAEMVIDAVPSVEMVRFVNSGTEACMAVLRLMRAFTGRDKVIKFDGCYHGHADMFLVKAGSGVATLGLPDSPGVPRTTTANTLTAPYNDLEAVKKLFSENPDAISGVILEPIVGNAGFITPEPGFLEGLRELTTENGSLLVFDEVMTGFRISYGGAQEKFGVTPDLTTLGKVIGGGLPVGAYGGKKEIMSMVAPSGPVYQAGTLSGNPLAMTAGIKTLELLKQEGTYEKLESTTSRLIEGIIQSAENNGIAINGGSVSAMFGFFLCEGPVRNFEEAKTNNSELFGKLHREMLKRGVYLAPSPFEAGFTSLAHSEEEIDRTLEAFDQSFSVIKN.

Position 271 is an N6-(pyridoxal phosphate)lysine (Lys-271).

This sequence belongs to the class-III pyridoxal-phosphate-dependent aminotransferase family. HemL subfamily. In terms of assembly, homodimer. The cofactor is pyridoxal 5'-phosphate.

Its subcellular location is the cytoplasm. It catalyses the reaction (S)-4-amino-5-oxopentanoate = 5-aminolevulinate. It participates in porphyrin-containing compound metabolism; protoporphyrin-IX biosynthesis; 5-aminolevulinate from L-glutamyl-tRNA(Glu): step 2/2. The protein operates within porphyrin-containing compound metabolism; chlorophyll biosynthesis. The sequence is that of Glutamate-1-semialdehyde 2,1-aminomutase from Prochlorococcus marinus subsp. pastoris (strain CCMP1986 / NIES-2087 / MED4).